The sequence spans 57 residues: High light-inducible protein HliD (57 aa).

Positions 25–30 match the Chlorophyll-binding motif motif; the sequence is EKLNGR. The helical transmembrane segment at 25-46 threads the bilayer; it reads EKLNGRAAMVGFLLILVIEYFT.

The protein belongs to the Hlip family. As to quaternary structure, probably forms dimers which bind 6 chlorophyll a and 2 beta-carotenoid molecules. Cofractionates in an approximately 50 kDa fraction of the thylakoid membrane with HliC. Does not associate with mature PSII. Purified in several chlorophyll- and carotenoid-containing complexes, including photosystem II (PSII) assembly intermediate complex RCII* (iD1, D1, D2, PsbE, PsbF, PsbI, Ycf39, Ycf48, HliC and HliD) and the Ycf39-Hlip complex (Ycf39, HliC, HliD and pigments).

It localises to the cellular thylakoid membrane. In terms of biological role, involved in photosystem II (PSII) assembly and/or repair under high light stress. Required for binding of chlorophyll and carotenoids by the Ycf39-Hlip complex. The Ycf39-Hlip complex binds D1 at an early stage of PSII assembly along with Ycf48, ribosomes and ChlG, the last enzyme in chlorophyll biosynthesis; it may be involved in chlorophyll reuse and delivery to D1 in the initial stages of PSII assembly. Binds chlorophyll a and beta-carotenoid in a 3:1 stoichiometry in the presence and absence of Yfc39; in the Ycf39-HliC-HliD complex, HliD binds all the pigment. The Ycf39-Hlip complex efficiently quenches chlorophyll fluorescence, contributing to photoprotection. Deletion of 4 to 5 members of the Hlip family suggests the proteins are involved in regulation of chlorophyll biosynthesis, in stabilization of chlorophyll-binding proteins and/or in reuse of chlorophylls, and may regulate tetrapyrrole biosynthesis. Might bind chlorophyll and/or carotenoids in association with HliC (called the ScpBE pair). Functionally, the Hlips might regulate tetrapyrrole biosynthesis, maybe at the level of aminolevulinic acid synthesis and probably stabilize PSII assembly intermediates. The chain is High light-inducible protein HliD (hliD) from Synechocystis sp. (strain ATCC 27184 / PCC 6803 / Kazusa).